A 979-amino-acid polypeptide reads, in one-letter code: MSIKLFSLAKELNVGVGSLAGFLRKKGFDVEDNNPNVRIENEEFDLLLTEFGKSLPKGEAERIRKKFVKQKQGTPASAPSAKEETAGMAAKEAQVIATEVPQDMRPRFTIKGKVETEKPAEPVPSPKDKEPDTVREDKPARETAPVKEETKVVPVKEDKPKEEKPKQEEPKREEPKPEEPVQAAPVAKPVEKPVDKPQQPVMTQKPQEAETPPPAQEMEKKEDTEEVFRLKTNTQEPQVKVVGKIDLSSINSSTRPKKKTKEDRQREQNDADGKKKRKRINKAAVDVKKEAAKVSGEQGKRNAGGGNHPSGNKNNNRPAQQQSNASGGRKNNKRQSLPPKVEISDEDVQRQVKETLARLTTKKTSTTLGRGAKYRKDKRDAASRAAQDAMELNSEEQHTLKLTEFVTVSDLSNMMDVPVNEVIATCMSIGMMVGINQRLDAETINIVAEEFGFKTEFVSADLVEAIAPEEDNEEDLVARPPIVTVMGHVDHGKTSLLDRIRNTNVIEGEAGGITQHIGAYGLKLPSGRRITFLDTPGHEAFTAMRARGAKITDIAIIIVAADDDVMPQTVEAINHASAAGVPMVFAINKIDKPAANPERIKEQLANMNYLVEDWGGKYQSQEISAKKGINITELLEKVLLEADILELKANPNRRAIGSIIESSLDKGRGYVSTVMVQNGTLNMGDVVLAGTCHGRIKAMFNERNQRVKQAGPSEPVLILGLNGAPAAGDTFNVLETEQEAREIANRREQLQREQGLRTHKILTLEDISRRRAIGNFQELNLIVKGDVDGSVEALSDSLIRLSTEEIQVNVIHKAVGQISESDVVLAAASSAIIIGFQVRPSVAARKQAETDGVEIRTYSIIYDTIEDIKSAMEGMLSPEIREEVTGSLEVLQTFKISKVGTIAGCMVKEGKVKRTSKVRLIRDGIVIHTGELGSLKRFKDDAKEVVAGLECGLNLAHSNDIQDGDIIEAFDEIEIKKTL.

A disordered region spans residues 68-392 (VKQKQGTPAS…SRAAQDAMEL (325 aa)). 3 stretches are compositionally biased toward basic and acidic residues: residues 102 to 179 (QDMR…KPEE), 217 to 229 (EMEK…EVFR), and 260 to 273 (TKED…DADG). Residues 309–326 (PSGNKNNNRPAQQQSNAS) are compositionally biased toward polar residues. The span at 347–356 (DVQRQVKETL) shows a compositional bias: basic and acidic residues. A tr-type G domain is found at 478 to 646 (ARPPIVTVMG…KVLLEADILE (169 aa)). Residues 487–494 (GHVDHGKT) are G1. 487–494 (GHVDHGKT) provides a ligand contact to GTP. Residues 512–516 (GITQH) are G2. Positions 534-537 (DTPG) are G3. GTP-binding positions include 534 to 538 (DTPGH) and 588 to 591 (NKID). A G4 region spans residues 588 to 591 (NKID). The tract at residues 624-626 (SAK) is G5.

This sequence belongs to the TRAFAC class translation factor GTPase superfamily. Classic translation factor GTPase family. IF-2 subfamily.

It localises to the cytoplasm. Its function is as follows. One of the essential components for the initiation of protein synthesis. Protects formylmethionyl-tRNA from spontaneous hydrolysis and promotes its binding to the 30S ribosomal subunits. Also involved in the hydrolysis of GTP during the formation of the 70S ribosomal complex. This chain is Translation initiation factor IF-2, found in Porphyromonas gingivalis (strain ATCC 33277 / DSM 20709 / CIP 103683 / JCM 12257 / NCTC 11834 / 2561).